A 156-amino-acid polypeptide reads, in one-letter code: RING finger protein 224 (156 aa).

The RING-type zinc finger occupies 24–71; the sequence is CIICCSAYDLSGHLPRRLYCGHTFCQACVRRLDTPAPEQRWIPCPQCR.

The sequence is that of RING finger protein 224 (RNF224) from Homo sapiens (Human).